The chain runs to 266 residues: Small ribosomal subunit protein uS2 (266 aa).

Residues 227 to 266 (GVSFTEETPSEPIQSDSSEEEEGSLDISDLFEDTDLKEEE) are disordered. Residues 231–240 (TEETPSEPIQ) show a composition bias toward polar residues. Residues 243-266 (SSEEEEGSLDISDLFEDTDLKEEE) are compositionally biased toward acidic residues.

The protein belongs to the universal ribosomal protein uS2 family.

This Pseudothermotoga lettingae (strain ATCC BAA-301 / DSM 14385 / NBRC 107922 / TMO) (Thermotoga lettingae) protein is Small ribosomal subunit protein uS2.